Consider the following 20-residue polypeptide: Peroxidase 1 (20 aa).

H14 contacts heme. T15 is a Ca(2+) binding site.

It belongs to the peroxidase family. Classical plant (class III) peroxidase subfamily. Ca(2+) is required as a cofactor. The cofactor is heme b.

It is found in the secreted. The enzyme catalyses 2 a phenolic donor + H2O2 = 2 a phenolic radical donor + 2 H2O. Its function is as follows. Removal of H(2)O(2), oxidation of toxic reductants, biosynthesis and degradation of lignin, suberization, auxin catabolism, response to environmental stresses such as wounding, pathogen attack and oxidative stress. These functions might be dependent on each isozyme/isoform in each plant tissue. The polypeptide is Peroxidase 1 (Betula pendula (European white birch)).